The sequence spans 573 residues: Delta 8-(E)-sphingolipid desaturase (573 aa).

The region spanning 2–77 (SRVLSRRDIA…FKIWKIGRID (76 aa)) is the Cytochrome b5 heme-binding domain. 2 residues coordinate heme: His-37 and His-60. Residues 228-248 (LFGISFYLLSLKWFAISAICL) traverse the membrane as a helical segment. Positions 260–264 (HDAGH) match the Histidine box-1 motif. The helical transmembrane segment at 273 to 293 (VDNIIGMTVASWIGGLSLGWW) threads the bilayer. The Histidine box-2 signature appears at 297-301 (HDVHH). The next 3 helical transmembrane spans lie at 353-372 (YLYY…LSWM), 393-413 (LAEL…KQMP), and 422-442 (VMIS…SHFA). The Histidine box-3 motif lies at 481–485 (QVIHH).

Belongs to the fatty acid desaturase type 1 family.

Its subcellular location is the membrane. It catalyses the reaction an N-acylsphing-4-enine + 2 Fe(II)-[cytochrome b5] + O2 + 2 H(+) = a (4E,8E)-4-sphinga-4,8-dienine ceramide + 2 Fe(III)-[cytochrome b5] + 2 H2O. It functions in the pathway lipid metabolism; sphingolipid metabolism. In terms of biological role, delta(8)-fatty-acid desaturase which introduces a double bond at the 8-position in the long-chain base (LCB) of ceramides. Required for the formation of the di-unsaturated sphingoid base (E,E)-sphinga-4,8-dienine during glucosylceramide (GluCer) biosynthesis. The sequence is that of Delta 8-(E)-sphingolipid desaturase from Kluyveromyces lactis (Yeast).